A 538-amino-acid polypeptide reads, in one-letter code: Lipid scramblase CLPTM1L (538 aa).

The Cytoplasmic segment spans residues 1–10 (MWSGRSSFTS). A helical membrane pass occupies residues 11–31 (LVVGVFVVYVVHTCWVMYGIV). At 32–284 (YTRPCSGDAN…VKGIFVDTNL (253 aa)) the chain is on the extracellular side. N-linked (GlcNAc...) asparagine glycans are attached at residues N91, N101, and N229. Residues 285-305 (YFLALTFFVAAFHLLFDFLAF) traverse the membrane as a helical segment. Residues 306–324 (KNDISFWKKKKSMIGMSTK) lie on the Cytoplasmic side of the membrane. Residues 325–342 (AVLWRCFSTVVIFLFLLD) traverse the membrane as a helical segment. The Extracellular segment spans residues 343 to 346 (EQTS). The chain crosses the membrane as a helical span at residues 347 to 364 (LLVLVPAGVGAAIELWKV). Residues 365–402 (KKALKMTIFWRGLMPEFQFGTYSESERKTEEYDTQAMK) lie on the Cytoplasmic side of the membrane. Residues 403–423 (YLSYLLYPLCVGGAVYSLLNI) traverse the membrane as a helical segment. Residues 424–428 (KYKSW) are Extracellular-facing. A helical membrane pass occupies residues 429-449 (YSWLINSFVNGVYAFGFLFML). Topologically, residues 450–538 (PQLFVNYKLK…EKATRAPHTD (89 aa)) are cytoplasmic.

Belongs to the CLPTM1 family. In terms of tissue distribution, ubiquitously expressed.

The protein localises to the endoplasmic reticulum membrane. It carries out the reaction a 6-(alpha-D-glucosaminyl)-1-(1,2-diacyl-sn-glycero-3-phospho)-1D-myo-inositol(in) = a 6-(alpha-D-glucosaminyl)-1-(1,2-diacyl-sn-glycero-3-phospho)-1D-myo-inositol(out). It catalyses the reaction 6-(alpha-D-glucosaminyl)-(1-octadecanoyl,2-(9Z)-octadecenoyl-sn-glycero-3-phospho)-1D-myo-inositol(in) = 6-(alpha-D-glucosaminyl)-(1-octadecanoyl,2-(9Z)-octadecenoyl-sn-glycero-3-phospho)-1D-myo-inositol(out). The catalysed reaction is a 1,2-diacyl-sn-glycero-3-phospho-(1D-myo-inositol)(in) = a 1,2-diacyl-sn-glycero-3-phospho-(1D-myo-inositol)(out). The enzyme catalyses a 1,2-diacyl-sn-glycero-3-phosphocholine(in) = a 1,2-diacyl-sn-glycero-3-phosphocholine(out). It carries out the reaction a 1,2-diacyl-sn-glycero-3-phosphoethanolamine(in) = a 1,2-diacyl-sn-glycero-3-phosphoethanolamine(out). Its function is as follows. Scramblase that mediates the translocation of glucosaminylphosphatidylinositol (alpha-D-GlcN-(1-6)-(1,2-diacyl-sn-glycero-3-phospho)-1D-myo-inositol, GlcN-PI) across the endoplasmic reticulum (ER) membrane, from the cytosolic leaflet to the luminal leaflet of the ER membrane, where it participates in the biosynthesis of glycosylphosphatidylinositol (GPI). GPI is a lipid glycoconjugate involved in post-translational modification of proteins. Can also translocate 1,2-diacyl-sn-glycero-3-phospho-(1D-myo-inositol) (phosphatidylinositol or PI), as well as several other phospholipids (1,2-diacyl-sn-glycero-3-phosphocholine, 1,2-diacyl-sn-glycero-3-phosphoethanolamine), and N-acetylglucosaminylphosphatidylinositol (GlcNAc-PI) in vitro. The sequence is that of Lipid scramblase CLPTM1L (CLPTM1L) from Homo sapiens (Human).